We begin with the raw amino-acid sequence, 260 residues long: Large ribosomal subunit protein uL2y (260 aa).

The disordered stretch occupies residues 227–248 (RRDKSAGAKVGQIAARRTGRRR).

The protein belongs to the universal ribosomal protein uL2 family.

The chain is Large ribosomal subunit protein uL2y (RPL8B) from Arabidopsis thaliana (Mouse-ear cress).